Here is a 185-residue protein sequence, read N- to C-terminus: Folate transporter FolT (185 aa).

4 consecutive transmembrane segments (helical) span residues 34-54 (LTVG…SLIA), 64-84 (LIAA…AFFV), 114-134 (VAVG…WLVM), and 157-177 (LIMF…QVIS).

As to quaternary structure, in E.coli forms a stable energy-coupling factor (ECF) transporter complex probably composed of a membrane-embedded substrate-binding protein (S component), two ATP-binding proteins (A components) and a transmembrane protein (T component).

The protein localises to the cell membrane. Its function is as follows. Folate-binding protein that interacts with the energy-coupling factor (ECF) ABC-transporter complex. Unlike classic ABC transporters this ECF transporter provides the energy necessary to transport a number of different substrates. The substrates themselves are bound by transmembrane, not extracytoplasmic soluble proteins. Upon coexpression with EcfA1A2T in E.coli allows 5-formyltetrahydrofolate uptake; uptake requires both FolT and EcfA1A2T. This is Folate transporter FolT (folT) from Leuconostoc mesenteroides subsp. mesenteroides (strain ATCC 8293 / DSM 20343 / BCRC 11652 / CCM 1803 / JCM 6124 / NCDO 523 / NBRC 100496 / NCIMB 8023 / NCTC 12954 / NRRL B-1118 / 37Y).